The chain runs to 145 residues: 3-hydroxyacyl-[acyl-carrier-protein] dehydratase FabZ (145 aa).

Residue histidine 52 is part of the active site.

It belongs to the thioester dehydratase family. FabZ subfamily.

It localises to the cytoplasm. It carries out the reaction a (3R)-hydroxyacyl-[ACP] = a (2E)-enoyl-[ACP] + H2O. Its function is as follows. Involved in unsaturated fatty acids biosynthesis. Catalyzes the dehydration of short chain beta-hydroxyacyl-ACPs and long chain saturated and unsaturated beta-hydroxyacyl-ACPs. In Deinococcus radiodurans (strain ATCC 13939 / DSM 20539 / JCM 16871 / CCUG 27074 / LMG 4051 / NBRC 15346 / NCIMB 9279 / VKM B-1422 / R1), this protein is 3-hydroxyacyl-[acyl-carrier-protein] dehydratase FabZ.